Reading from the N-terminus, the 224-residue chain is 7-cyano-7-deazaguanine synthase (224 aa).

Residue 10–20 (LSGGLDSATVV) participates in ATP binding. Zn(2+) is bound by residues cysteine 189, cysteine 199, cysteine 202, and cysteine 205.

This sequence belongs to the QueC family. It depends on Zn(2+) as a cofactor.

It catalyses the reaction 7-carboxy-7-deazaguanine + NH4(+) + ATP = 7-cyano-7-deazaguanine + ADP + phosphate + H2O + H(+). It participates in purine metabolism; 7-cyano-7-deazaguanine biosynthesis. In terms of biological role, catalyzes the ATP-dependent conversion of 7-carboxy-7-deazaguanine (CDG) to 7-cyano-7-deazaguanine (preQ(0)). The polypeptide is 7-cyano-7-deazaguanine synthase (Ectopseudomonas mendocina (strain ymp) (Pseudomonas mendocina)).